A 555-amino-acid polypeptide reads, in one-letter code: Dihydroxy-acid dehydratase (555 aa).

A Mg(2+)-binding site is contributed by D78. [2Fe-2S] cluster is bound at residue C119. Mg(2+) is bound by residues D120 and K121. K121 bears the N6-carboxylysine mark. C192 serves as a coordination point for [2Fe-2S] cluster. E444 serves as a coordination point for Mg(2+). S470 acts as the Proton acceptor in catalysis.

This sequence belongs to the IlvD/Edd family. Homodimer. It depends on [2Fe-2S] cluster as a cofactor. Mg(2+) is required as a cofactor.

The catalysed reaction is (2R)-2,3-dihydroxy-3-methylbutanoate = 3-methyl-2-oxobutanoate + H2O. It carries out the reaction (2R,3R)-2,3-dihydroxy-3-methylpentanoate = (S)-3-methyl-2-oxopentanoate + H2O. It functions in the pathway amino-acid biosynthesis; L-isoleucine biosynthesis; L-isoleucine from 2-oxobutanoate: step 3/4. It participates in amino-acid biosynthesis; L-valine biosynthesis; L-valine from pyruvate: step 3/4. Functionally, functions in the biosynthesis of branched-chain amino acids. Catalyzes the dehydration of (2R,3R)-2,3-dihydroxy-3-methylpentanoate (2,3-dihydroxy-3-methylvalerate) into 2-oxo-3-methylpentanoate (2-oxo-3-methylvalerate) and of (2R)-2,3-dihydroxy-3-methylbutanoate (2,3-dihydroxyisovalerate) into 2-oxo-3-methylbutanoate (2-oxoisovalerate), the penultimate precursor to L-isoleucine and L-valine, respectively. This Halalkalibacterium halodurans (strain ATCC BAA-125 / DSM 18197 / FERM 7344 / JCM 9153 / C-125) (Bacillus halodurans) protein is Dihydroxy-acid dehydratase.